The primary structure comprises 398 residues: Bifunctional enzyme IspD/IspF (398 aa).

Residues methionine 1 to isoleucine 234 form a 2-C-methyl-D-erythritol 4-phosphate cytidylyltransferase region. Residues arginine 235–glycine 398 are 2-C-methyl-D-erythritol 2,4-cyclodiphosphate synthase. 2 residues coordinate a divalent metal cation: aspartate 241 and histidine 243. Residues aspartate 241–histidine 243 and histidine 267–serine 268 each bind 4-CDP-2-C-methyl-D-erythritol 2-phosphate. Histidine 275 lines the a divalent metal cation pocket. 4-CDP-2-C-methyl-D-erythritol 2-phosphate-binding positions include aspartate 289–glycine 291, threonine 365–glutamate 368, phenylalanine 372, and arginine 375.

In the N-terminal section; belongs to the IspD/TarI cytidylyltransferase family. IspD subfamily. The protein in the C-terminal section; belongs to the IspF family. A divalent metal cation serves as cofactor.

It carries out the reaction 2-C-methyl-D-erythritol 4-phosphate + CTP + H(+) = 4-CDP-2-C-methyl-D-erythritol + diphosphate. The enzyme catalyses 4-CDP-2-C-methyl-D-erythritol 2-phosphate = 2-C-methyl-D-erythritol 2,4-cyclic diphosphate + CMP. It functions in the pathway isoprenoid biosynthesis; isopentenyl diphosphate biosynthesis via DXP pathway; isopentenyl diphosphate from 1-deoxy-D-xylulose 5-phosphate: step 2/6. The protein operates within isoprenoid biosynthesis; isopentenyl diphosphate biosynthesis via DXP pathway; isopentenyl diphosphate from 1-deoxy-D-xylulose 5-phosphate: step 4/6. In terms of biological role, bifunctional enzyme that catalyzes the formation of 4-diphosphocytidyl-2-C-methyl-D-erythritol from CTP and 2-C-methyl-D-erythritol 4-phosphate (MEP) (IspD), and catalyzes the conversion of 4-diphosphocytidyl-2-C-methyl-D-erythritol 2-phosphate (CDP-ME2P) to 2-C-methyl-D-erythritol 2,4-cyclodiphosphate (ME-CPP) with a corresponding release of cytidine 5-monophosphate (CMP) (IspF). The sequence is that of Bifunctional enzyme IspD/IspF from Rhodopseudomonas palustris (strain ATCC BAA-98 / CGA009).